We begin with the raw amino-acid sequence, 308 residues long: Aspartate carbamoyltransferase catalytic subunit (308 aa).

Residues Arg-58 and Thr-59 each contribute to the carbamoyl phosphate site. Lys-86 contacts L-aspartate. Arg-108, His-136, and Gln-139 together coordinate carbamoyl phosphate. Arg-169 and Arg-227 together coordinate L-aspartate. Carbamoyl phosphate is bound by residues Gly-268 and Pro-269.

This sequence belongs to the aspartate/ornithine carbamoyltransferase superfamily. ATCase family. In terms of assembly, heterododecamer (2C3:3R2) of six catalytic PyrB chains organized as two trimers (C3), and six regulatory PyrI chains organized as three dimers (R2).

The enzyme catalyses carbamoyl phosphate + L-aspartate = N-carbamoyl-L-aspartate + phosphate + H(+). The protein operates within pyrimidine metabolism; UMP biosynthesis via de novo pathway; (S)-dihydroorotate from bicarbonate: step 2/3. In terms of biological role, catalyzes the condensation of carbamoyl phosphate and aspartate to form carbamoyl aspartate and inorganic phosphate, the committed step in the de novo pyrimidine nucleotide biosynthesis pathway. This Chloroflexus aurantiacus (strain ATCC 29366 / DSM 635 / J-10-fl) protein is Aspartate carbamoyltransferase catalytic subunit.